Here is a 206-residue protein sequence, read N- to C-terminus: MTYIVGLTGGIGSGKTTIANLFTDLGVPLVDADVVAREVVAKDSPLLSKIVEHFGAQILTEQGELNRAALRERVFNHDEDKLWLNNLLHPAIRERMKQKLAEQTAPYTLFVVPLLIENKLTALCDRILVVDVSPQTQLARSAQRDNNNFEQIQRIMNSQVSQQERLKWADDVINNDAELAQNLPHLQQKVLELHQFYLQQAENKNA.

Residues 4–204 enclose the DPCK domain; it reads IVGLTGGIGS…QFYLQQAENK (201 aa). 12 to 17 provides a ligand contact to ATP; sequence GSGKTT.

The protein belongs to the CoaE family.

The protein localises to the cytoplasm. The catalysed reaction is 3'-dephospho-CoA + ATP = ADP + CoA + H(+). Its pathway is cofactor biosynthesis; coenzyme A biosynthesis; CoA from (R)-pantothenate: step 5/5. Functionally, catalyzes the phosphorylation of the 3'-hydroxyl group of dephosphocoenzyme A to form coenzyme A. This is Dephospho-CoA kinase from Haemophilus influenzae (strain ATCC 51907 / DSM 11121 / KW20 / Rd).